A 427-amino-acid chain; its full sequence is Adenosylhomocysteinase (427 aa).

Substrate-binding residues include Asp132 and Glu157. 158 to 160 (TTT) contributes to the NAD(+) binding site. Positions 187 and 191 each coordinate substrate. NAD(+)-binding positions include Asn192, 221 to 226 (GYGDCG), Glu244, Asn279, 300 to 302 (AGH), and Asn347.

Belongs to the adenosylhomocysteinase family. It depends on NAD(+) as a cofactor.

Its subcellular location is the cytoplasm. The enzyme catalyses S-adenosyl-L-homocysteine + H2O = L-homocysteine + adenosine. The protein operates within amino-acid biosynthesis; L-homocysteine biosynthesis; L-homocysteine from S-adenosyl-L-homocysteine: step 1/1. Functionally, may play a key role in the regulation of the intracellular concentration of adenosylhomocysteine. This is Adenosylhomocysteinase from Halobacterium salinarum (strain ATCC 29341 / DSM 671 / R1).